A 1088-amino-acid polypeptide reads, in one-letter code: DEAD-box ATP-dependent RNA helicase 40 (1088 aa).

Disordered stretches follow at residues 1 to 28 (MATT…PWKG), 47 to 178 (TQYE…QYAH), and 192 to 254 (TQGL…QNTH). A2 is subject to N-acetylalanine. The 35-residue stretch at 20–54 (PTLPQPWKGLIDGSTGILYYWNPETNVTQYERPSA) folds into the WW domain. Composition is skewed to low complexity over residues 87-137 (VGHV…SQSM), 148-171 (QTYQ…MPQQ), and 200-215 (QTPQ…PSQQ). Basic and acidic residues predominate over residues 222 to 231 (PKREGDEFHG). Over residues 236-254 (GFSQPHLPNSERSPSQNTH) the composition is skewed to polar residues. Positions 435–463 (ITFESSGLPPEILRELLSAGFPSPTPIQA) match the Q motif motif. Positions 466 to 640 (WPIALQSRDI…SDLLVNPVQV (175 aa)) constitute a Helicase ATP-binding domain. 479 to 486 (AKTGSGKT) is a binding site for ATP. The short motif at 588–591 (DEAD) is the DEAD box element. The region spanning 669–813 (RLEQILRSQE…QVPPQVRDIA (145 aa)) is the Helicase C-terminal domain. Gly residues-rich tracts occupy residues 861-885 (EGGF…GGRF), 893-902 (GRGGNRGRGF), 911-920 (NVGGRGGFGR), and 932-944 (FGRG…GRGV). Residues 861–1033 (EGGFGGREGG…RRDRAPRVSG (173 aa)) are disordered. The segment covering 945–963 (GRFDNRRGRSRSRSPDLVR) has biased composition (basic and acidic residues). Residues 969 to 983 (SSYSRSRSRSGSYSR) show a composition bias toward low complexity. Positions 984–1013 (SRSRSRSWSRSRSRSPRHSRDRGGHNRSRS) are enriched in basic residues.

The protein belongs to the DEAD box helicase family. DDX5/DBP2 subfamily.

The protein resides in the nucleus. It carries out the reaction ATP + H2O = ADP + phosphate + H(+). ATP-dependent RNA helicase involved nonsense-mediated mRNA decay and ribosome biogenesis through rRNA processing. This Arabidopsis thaliana (Mouse-ear cress) protein is DEAD-box ATP-dependent RNA helicase 40 (RH40).